We begin with the raw amino-acid sequence, 468 residues long: MTTKPIHVIGGGLAGSEAAWQAAEAGVPVILHEMRPVRGTDAHKTDGLAELVCSNSFRSDDAQTNAVGLLHAEMRLAGSLIMRAGDANQVPAGGALAVDRDGFSDAVTQAIHGHPLITVVREEVAGLPPSEWDQTIIATGPLTAPSLAEAIRQETGAEALAFFDAIAPIVHFDTIDMDTCWFQSRYDKAGPGGTGKDYINCPMNKEQYQAFVQALLDGEKTAFKEWEGTPYFDGCLPIEVMAERGPETLRHGPMKPMGLTNAHKPDEKAYAVVQLRQDNALGTLYNMVGFQTKLKYAEQVRIFRMIPGLENAEFARLGGLHRNTYINSPALLDITLQLKSRPGLRFAGQITGCEGYVESAAMGLMAGRFAAAARLGRKMMPPPATTAFGSLISHITGGHILSEDEPGKRSFQPMNVNFGLFPPVELPKPEGKRLRGKEKTLAKKRAITARALADCSDWLGVPTRAAAE.

Position 10 to 15 (10 to 15 (GGGLAG)) interacts with FAD.

It belongs to the MnmG family. TrmFO subfamily. FAD serves as cofactor.

It is found in the cytoplasm. It carries out the reaction uridine(54) in tRNA + (6R)-5,10-methylene-5,6,7,8-tetrahydrofolate + NADH + H(+) = 5-methyluridine(54) in tRNA + (6S)-5,6,7,8-tetrahydrofolate + NAD(+). The catalysed reaction is uridine(54) in tRNA + (6R)-5,10-methylene-5,6,7,8-tetrahydrofolate + NADPH + H(+) = 5-methyluridine(54) in tRNA + (6S)-5,6,7,8-tetrahydrofolate + NADP(+). Its function is as follows. Catalyzes the folate-dependent formation of 5-methyl-uridine at position 54 (M-5-U54) in all tRNAs. This Chelativorans sp. (strain BNC1) protein is Methylenetetrahydrofolate--tRNA-(uracil-5-)-methyltransferase TrmFO.